Here is a 600-residue protein sequence, read N- to C-terminus: Aspartate--tRNA(Asp/Asn) ligase (600 aa).

L-aspartate is bound at residue Glu174. Positions 198 to 201 (QLFK) are aspartate. L-aspartate is bound at residue Arg220. ATP-binding positions include 220–222 (RDE) and Gln229. His457 provides a ligand contact to L-aspartate. Glu491 provides a ligand contact to ATP. Position 498 (Arg498) interacts with L-aspartate. An ATP-binding site is contributed by 543–546 (GLDR).

It belongs to the class-II aminoacyl-tRNA synthetase family. Type 1 subfamily. In terms of assembly, homodimer.

Its subcellular location is the cytoplasm. The catalysed reaction is tRNA(Asx) + L-aspartate + ATP = L-aspartyl-tRNA(Asx) + AMP + diphosphate. Functionally, aspartyl-tRNA synthetase with relaxed tRNA specificity since it is able to aspartylate not only its cognate tRNA(Asp) but also tRNA(Asn). Reaction proceeds in two steps: L-aspartate is first activated by ATP to form Asp-AMP and then transferred to the acceptor end of tRNA(Asp/Asn). This chain is Aspartate--tRNA(Asp/Asn) ligase, found in Burkholderia lata (strain ATCC 17760 / DSM 23089 / LMG 22485 / NCIMB 9086 / R18194 / 383).